The following is a 109-amino-acid chain: Putative double-stranded DNA mimic protein YciU (109 aa).

It belongs to the putative dsDNA mimic protein family.

Its function is as follows. May act as a double-stranded DNA (dsDNA) mimic. Probably regulates the activity of a dsDNA-binding protein. The polypeptide is Putative double-stranded DNA mimic protein YciU (Shigella flexneri).